A 146-amino-acid polypeptide reads, in one-letter code: Single-stranded DNA-binding protein 1-A, mitochondrial (146 aa).

A mitochondrion-targeting transit peptide spans 1-17; that stretch reads MFHRPALQVFRQFARCQ. One can recognise an SSB domain in the interval 28-140; sequence INKVQLLGRV…IIADNIIFLS (113 aa).

Homotetramer.

Its subcellular location is the mitochondrion. It localises to the mitochondrion matrix. It is found in the mitochondrion nucleoid. Its function is as follows. Binds preferentially and cooperatively to pyrimidine rich single-stranded DNA (ss-DNA). Required to maintain the copy number of mitochondrial DNA (mtDNA) and plays crucial roles during mtDNA replication that stimulate activity of the DNA polymerase at the replication fork. May also function in mtDNA repair. This is Single-stranded DNA-binding protein 1-A, mitochondrial (ssbp1-a) from Xenopus laevis (African clawed frog).